A 184-amino-acid chain; its full sequence is Ribosome-recycling factor (184 aa).

This sequence belongs to the RRF family.

It localises to the cytoplasm. In terms of biological role, responsible for the release of ribosomes from messenger RNA at the termination of protein biosynthesis. May increase the efficiency of translation by recycling ribosomes from one round of translation to another. In Clostridium botulinum (strain Okra / Type B1), this protein is Ribosome-recycling factor.